We begin with the raw amino-acid sequence, 314 residues long: Zinc-binding alcohol dehydrogenase domain-containing protein cipB (314 aa).

The protein belongs to the zinc-containing alcohol dehydrogenase family.

Functionally, involved in osmoadaptation. The protein is Zinc-binding alcohol dehydrogenase domain-containing protein cipB (cipB) of Emericella nidulans (strain FGSC A4 / ATCC 38163 / CBS 112.46 / NRRL 194 / M139) (Aspergillus nidulans).